Consider the following 54-residue polypeptide: MPQLNLAWWLLNFFLGWTSLLVIFIILLNTSITNNTANTSTTTNTTPNLNWTWN.

A helical membrane pass occupies residues 8 to 28 (WWLLNFFLGWTSLLVIFIILL).

The protein belongs to the ATPase protein 8 family. F-type ATPases have 2 components, CF(1) - the catalytic core - and CF(0) - the membrane proton channel.

Its subcellular location is the mitochondrion membrane. In terms of biological role, mitochondrial membrane ATP synthase (F(1)F(0) ATP synthase or Complex V) produces ATP from ADP in the presence of a proton gradient across the membrane which is generated by electron transport complexes of the respiratory chain. F-type ATPases consist of two structural domains, F(1) - containing the extramembraneous catalytic core and F(0) - containing the membrane proton channel, linked together by a central stalk and a peripheral stalk. During catalysis, ATP synthesis in the catalytic domain of F(1) is coupled via a rotary mechanism of the central stalk subunits to proton translocation. Part of the complex F(0) domain. Minor subunit located with subunit a in the membrane. The chain is ATP synthase protein 8 (MT-ATP8) from Patiria pectinifera (Starfish).